Reading from the N-terminus, the 320-residue chain is tRNA-cytidine(32) 2-sulfurtransferase (320 aa).

The short motif at 54 to 59 (SGGKDS) is the PP-loop motif element. [4Fe-4S] cluster contacts are provided by C129, C132, and C220.

The protein belongs to the TtcA family. As to quaternary structure, homodimer. The cofactor is Mg(2+). [4Fe-4S] cluster serves as cofactor.

Its subcellular location is the cytoplasm. It catalyses the reaction cytidine(32) in tRNA + S-sulfanyl-L-cysteinyl-[cysteine desulfurase] + AH2 + ATP = 2-thiocytidine(32) in tRNA + L-cysteinyl-[cysteine desulfurase] + A + AMP + diphosphate + H(+). It participates in tRNA modification. In terms of biological role, catalyzes the ATP-dependent 2-thiolation of cytidine in position 32 of tRNA, to form 2-thiocytidine (s(2)C32). The sulfur atoms are provided by the cysteine/cysteine desulfurase (IscS) system. The sequence is that of tRNA-cytidine(32) 2-sulfurtransferase from Bordetella parapertussis (strain 12822 / ATCC BAA-587 / NCTC 13253).